The following is a 406-amino-acid chain: Probable tRNA sulfurtransferase (406 aa).

The THUMP domain maps to 60 to 162 (PEAKARLQDT…PGAALLEVER (103 aa)). ATP is bound by residues 180 to 181 (LL), 205 to 206 (HF), Arg262, Gly284, and Gln293.

The protein belongs to the ThiI family.

The protein resides in the cytoplasm. The catalysed reaction is [ThiI sulfur-carrier protein]-S-sulfanyl-L-cysteine + a uridine in tRNA + 2 reduced [2Fe-2S]-[ferredoxin] + ATP + H(+) = [ThiI sulfur-carrier protein]-L-cysteine + a 4-thiouridine in tRNA + 2 oxidized [2Fe-2S]-[ferredoxin] + AMP + diphosphate. It catalyses the reaction [ThiS sulfur-carrier protein]-C-terminal Gly-Gly-AMP + S-sulfanyl-L-cysteinyl-[cysteine desulfurase] + AH2 = [ThiS sulfur-carrier protein]-C-terminal-Gly-aminoethanethioate + L-cysteinyl-[cysteine desulfurase] + A + AMP + 2 H(+). The protein operates within cofactor biosynthesis; thiamine diphosphate biosynthesis. Its function is as follows. Catalyzes the ATP-dependent transfer of a sulfur to tRNA to produce 4-thiouridine in position 8 of tRNAs, which functions as a near-UV photosensor. Also catalyzes the transfer of sulfur to the sulfur carrier protein ThiS, forming ThiS-thiocarboxylate. This is a step in the synthesis of thiazole, in the thiamine biosynthesis pathway. The sulfur is donated as persulfide by IscS. This is Probable tRNA sulfurtransferase from Thermus thermophilus (strain ATCC 27634 / DSM 579 / HB8).